Here is a 252-residue protein sequence, read N- to C-terminus: Acetoacetate decarboxylase (252 aa).

Lysine 116 serves as the catalytic Schiff-base intermediate with acetoacetate.

The protein belongs to the ADC family.

It catalyses the reaction acetoacetate + H(+) = acetone + CO2. In terms of biological role, catalyzes the conversion of acetoacetate to acetone and carbon dioxide. In Paraburkholderia phytofirmans (strain DSM 17436 / LMG 22146 / PsJN) (Burkholderia phytofirmans), this protein is Acetoacetate decarboxylase.